The chain runs to 557 residues: Protein NRT1/ PTR FAMILY 2.6 (557 aa).

Transmembrane regions (helical) follow at residues 26–46 (ITFP…LGWL), 67–87 (ILNI…IAAD), 89–109 (FFGT…GVVL), 136–156 (NIQL…AGGL), 177–197 (FFNW…TAIV), 203–223 (ISWS…LIVF), 318–338 (IIPL…QLGL), 356–376 (IPAG…IIVN), 398–418 (VGIG…VEAK), 439–459 (VLWL…HFPG), 478–498 (SITS…IDLI), and 518–538 (YWIL…CSWF).

The protein belongs to the major facilitator superfamily. Proton-dependent oligopeptide transporter (POT/PTR) (TC 2.A.17) family. Expressed in roots.

The protein localises to the membrane. Its function is as follows. Transporter involved in a passive nitrate efflux. The sequence is that of Protein NRT1/ PTR FAMILY 2.6 (NPF2.6) from Arabidopsis thaliana (Mouse-ear cress).